The primary structure comprises 390 residues: RNA binding protein fox-1 homolog 2 (390 aa).

Positions 1–127 are disordered; that stretch reads MQNEPLTPGY…STPKRLHVSN (127 aa). Composition is skewed to polar residues over residues 18–28 and 65–95; these read SQGNQEPTTTP and GEHN…SLTT. H67 carries the phosphothreonine modification. The span at 97–117 shows a compositional bias: low complexity; the sequence is GGAQTDGQQSQTQSSENSESK. The 77-residue stretch at 121–197 folds into the RRM domain; the sequence is KRLHVSNIPF…RKIEVNNATA (77 aa). An omega-N-methylarginine mark is found at G249, G267, F268, A277, and R281. 2 positions are modified to asymmetric dimethylarginine: R297 and R329. Residues R381 and R386 each carry the asymmetric dimethylarginine; alternate modification. R381 and R386 each carry omega-N-methylarginine; alternate.

Interacts with ER-alpha N-terminal activation domain. Interacts with RBPMS; the interaction allows cooperative assembly of stable cell-specific alternative splicing regulatory complexes.

The protein resides in the nucleus. The protein localises to the cytoplasm. Functionally, RNA-binding protein that regulates alternative splicing events by binding to 5'-UGCAUGU-3' elements. Prevents binding of U2AF2 to the 3'-splice site. Regulates alternative splicing of tissue-specific exons and of differentially spliced exons during erythropoiesis. RNA-binding protein that seems to act as a coregulatory factor of ER-alpha. Together with RNA binding proteins RBPMS and MBNL1/2, activates vascular smooth muscle cells alternative splicing events. This Homo sapiens (Human) protein is RNA binding protein fox-1 homolog 2 (RBFOX2).